The primary structure comprises 49 residues: Feruloyl esterase A (49 aa).

It belongs to the AB hydrolase superfamily. FaeA family.

It is found in the secreted. It catalyses the reaction feruloyl-polysaccharide + H2O = ferulate + polysaccharide.. In terms of biological role, involved in degradation of plant cell walls. Hydrolyzes the feruloyl-arabinose ester bond in arabinoxylans as well as the feruloyl-galactose and feruloyl-arabinose ester bonds in pectin. Active against methyl esters of sinapate (MSA), but not caffeate (MCA). The polypeptide is Feruloyl esterase A (Talaromyces stipitatus (strain ATCC 10500 / CBS 375.48 / QM 6759 / NRRL 1006) (Penicillium stipitatum)).